A 130-amino-acid polypeptide reads, in one-letter code: Small ribosomal subunit protein uS8 (130 aa).

The protein belongs to the universal ribosomal protein uS8 family. Part of the 30S ribosomal subunit. Contacts proteins S5 and S12.

Its function is as follows. One of the primary rRNA binding proteins, it binds directly to 16S rRNA central domain where it helps coordinate assembly of the platform of the 30S subunit. In Ectopseudomonas mendocina (strain ymp) (Pseudomonas mendocina), this protein is Small ribosomal subunit protein uS8.